The following is a 270-amino-acid chain: Glutamate racemase (270 aa).

Substrate contacts are provided by residues 7 to 8 and 39 to 40; these read DS and YG. The active-site Proton donor/acceptor is Cys70. 71–72 serves as a coordination point for substrate; that stretch reads NT. Cys194 serves as the catalytic Proton donor/acceptor. 195-196 serves as a coordination point for substrate; that stretch reads TH.

The protein belongs to the aspartate/glutamate racemases family.

It carries out the reaction L-glutamate = D-glutamate. It functions in the pathway cell wall biogenesis; peptidoglycan biosynthesis. Functionally, provides the (R)-glutamate required for cell wall biosynthesis. The protein is Glutamate racemase of Cereibacter sphaeroides (strain ATCC 17025 / ATH 2.4.3) (Rhodobacter sphaeroides).